The sequence spans 444 residues: Xylose isomerase (444 aa).

Catalysis depends on residues His-101 and Asp-104. Residues Glu-232, Glu-268, His-271, Asp-296, Asp-307, Asp-309, and Asp-339 each coordinate Mg(2+).

This sequence belongs to the xylose isomerase family. In terms of assembly, homotetramer. Mg(2+) serves as cofactor.

Its subcellular location is the cytoplasm. It catalyses the reaction alpha-D-xylose = alpha-D-xylulofuranose. The protein is Xylose isomerase of Thermotoga maritima (strain ATCC 43589 / DSM 3109 / JCM 10099 / NBRC 100826 / MSB8).